A 180-amino-acid polypeptide reads, in one-letter code: Ferric nitrobindin-like protein (180 aa).

A GXWXGXG motif is present at residues 21–27; the sequence is GRWEGAG.

Belongs to the nitrobindin family.

This Kineococcus radiotolerans (strain ATCC BAA-149 / DSM 14245 / SRS30216) protein is Ferric nitrobindin-like protein.